The sequence spans 122 residues: Prefoldin subunit 1 (122 aa).

N-acetylalanine is present on Ala2.

The protein belongs to the prefoldin subunit beta family. Heterohexamer of two PFD-alpha type and four PFD-beta type subunits.

Functionally, binds specifically to cytosolic chaperonin (c-CPN) and transfers target proteins to it. Binds to nascent polypeptide chain and promotes folding in an environment in which there are many competing pathways for nonnative proteins. The chain is Prefoldin subunit 1 (PFDN1) from Bos taurus (Bovine).